The following is a 185-amino-acid chain: Lysozyme g (185 aa).

E73 is an active-site residue.

This sequence belongs to the glycosyl hydrolase 23 family.

It carries out the reaction Hydrolysis of (1-&gt;4)-beta-linkages between N-acetylmuramic acid and N-acetyl-D-glucosamine residues in a peptidoglycan and between N-acetyl-D-glucosamine residues in chitodextrins.. The polypeptide is Lysozyme g (Cyprinus carpio (Common carp)).